The sequence spans 256 residues: Ribosomal RNA small subunit methyltransferase J (256 aa).

S-adenosyl-L-methionine is bound by residues 101–102 (RD), 117–118 (ER), 153–154 (SS), and aspartate 176.

It belongs to the methyltransferase superfamily. RsmJ family.

Its subcellular location is the cytoplasm. It catalyses the reaction guanosine(1516) in 16S rRNA + S-adenosyl-L-methionine = N(2)-methylguanosine(1516) in 16S rRNA + S-adenosyl-L-homocysteine + H(+). Its function is as follows. Specifically methylates the guanosine in position 1516 of 16S rRNA. This chain is Ribosomal RNA small subunit methyltransferase J, found in Photobacterium profundum (strain SS9).